Reading from the N-terminus, the 294-residue chain is Ribosomal RNA small subunit methyltransferase I (294 aa).

Belongs to the methyltransferase superfamily. RsmI family.

It localises to the cytoplasm. The catalysed reaction is cytidine(1402) in 16S rRNA + S-adenosyl-L-methionine = 2'-O-methylcytidine(1402) in 16S rRNA + S-adenosyl-L-homocysteine + H(+). In terms of biological role, catalyzes the 2'-O-methylation of the ribose of cytidine 1402 (C1402) in 16S rRNA. The protein is Ribosomal RNA small subunit methyltransferase I of Mesorhizobium japonicum (strain LMG 29417 / CECT 9101 / MAFF 303099) (Mesorhizobium loti (strain MAFF 303099)).